The following is a 154-amino-acid chain: Anaerobic ribonucleoside-triphosphate reductase-activating protein (154 aa).

Positions 26, 30, and 33 each coordinate [4Fe-4S] cluster. S-adenosyl-L-methionine-binding positions include 32-34 (GCY) and G74.

The protein belongs to the organic radical-activating enzymes family. Forms a tetramer composed of two NrdD and two NrdG subunits. The cofactor is [4Fe-4S] cluster.

The protein resides in the cytoplasm. The enzyme catalyses glycyl-[protein] + reduced [flavodoxin] + S-adenosyl-L-methionine = glycin-2-yl radical-[protein] + semiquinone [flavodoxin] + 5'-deoxyadenosine + L-methionine + H(+). In terms of biological role, activation of anaerobic ribonucleoside-triphosphate reductase under anaerobic conditions by generation of an organic free radical, using S-adenosylmethionine and reduced flavodoxin as cosubstrates to produce 5'-deoxy-adenosine. This chain is Anaerobic ribonucleoside-triphosphate reductase-activating protein (nrdG), found in Salmonella typhi.